We begin with the raw amino-acid sequence, 105 residues long: Small ribosomal subunit protein uS10 (105 aa).

The protein belongs to the universal ribosomal protein uS10 family. Part of the 30S ribosomal subunit.

Its function is as follows. Involved in the binding of tRNA to the ribosomes. This chain is Small ribosomal subunit protein uS10, found in Desulfotalea psychrophila (strain LSv54 / DSM 12343).